The chain runs to 793 residues: Translocase of chloroplast 90, chloroplastic (793 aa).

Residues 22–59 (LGSDPFFRDPHQEQDNHSQAPAAPQPVTLSEPPCSTSS) are disordered. Over residues 27–37 (FFRDPHQEQDN) the composition is skewed to basic and acidic residues. A coiled-coil region spans residues 130 to 157 (LIRAEESELKNVKLRQDRAKALAREQES). Positions 164–394 (DFSLRILVLG…FRDSIGLGQP (231 aa)) constitute an AIG1-type G domain. A G1 region spans residues 173–180 (GKTGVGKS). GTP contacts are provided by residues 176 to 181 (GVGKSA) and 195 to 200 (DAFRPG). S180 serves as a coordination point for Mg(2+). Residues 195-198 (DAFR) form a homodimerization region. Positions 199–203 (PGTDR) are G2. Residues 220 to 223 (DTPG) form a G3 region. Residues 259-264 (RLDMID) form a homodimerization region. The chain crosses the membrane as a helical span at residues 279–297 (IFGAAIWLNTILVMTHSAA). The segment at 293-296 (THSA) is G4. Residues H294 and 341–342 (EN) contribute to the GTP site. Residues 341–343 (ENH) are G5. Coiled-coil stretches lie at residues 410–442 (LRRRLSSGADETEKEIDKLLNLDLEEEDEYDQL) and 477–503 (KKQLKEECRRRRDEKLVEEENLEDTEQ).

This sequence belongs to the TRAFAC class TrmE-Era-EngA-EngB-Septin-like GTPase superfamily. AIG1/Toc34/Toc159-like paraseptin GTPase family. TOC159 subfamily. Homodimer. Part of the TOC core complex that includes 1 protein for the specific recognition of transit peptides surrounded by a ring composed of four proteins forming translocation channels, and four to five GTP-binding proteins providing energy. This core complex can interact with components of the TIC complex to form a larger import complex. Chloroplastic protein precursor such as prSS (precursor of the RuBisCO small subunit) interacts with these complexes. The TOC complex contains a specific subset of polar lipids such as digalactosyldiacylglyceride (DGDG), phosphatidylcholine (PC) and phosphatidylglycerol (PG). Interacts with TOC33 and TOC75. The cofactor is Mg(2+). As to expression, expressed in seedlings, leaves, flowers, and roots.

It is found in the plastid. It localises to the chloroplast outer membrane. Its subcellular location is the cytoplasm. In terms of biological role, GTPase involved in protein precursor import into chloroplasts. Seems to recognize chloroplast-destined precursor proteins and regulate their presentation to the translocation channel through GTP hydrolysis. Probably specialized in the import of nuclear encoded photosynthetic preproteins from the cytoplasm to the chloroplast. The protein is Translocase of chloroplast 90, chloroplastic (TOC90) of Arabidopsis thaliana (Mouse-ear cress).